The following is a 686-amino-acid chain: Solute carrier family 22 member 23 (686 aa).

Disordered stretches follow at residues 1–62 and 169–193; these read MAID…GGGP and GNRS…DKGD. N24 carries N-linked (GlcNAc...) asparagine glycosylation. 2 helical membrane-spanning segments follow: residues 234–254 and 258–278; these read FSLL…ADWV and PVLL…ALSV. N279 carries an N-linked (GlcNAc...) asparagine glycan. 8 helical membrane passes run 288–308, 315–335, 344–364, 467–487, 494–514, 538–558, 569–589, and 598–618; these read FFEG…RIEL, FMIT…MPGL, VLQA…SIFP, ADYY…CVVV, GGLL…LGLL, IAFS…SVFF, CGGL…APII, and FLHH…ILLL.

The protein belongs to the major facilitator (TC 2.A.1) superfamily. Organic cation transporter (TC 2.A.1.19) family.

The protein resides in the membrane. The polypeptide is Solute carrier family 22 member 23 (SLC22A23) (Homo sapiens (Human)).